A 562-amino-acid polypeptide reads, in one-letter code: Ikaros family zinc finger protein (562 aa).

3 consecutive C2H2-type zinc fingers follow at residues 45 to 67 (IKCE…IRSH), 73 to 95 (FKCH…YKIH), and 101 to 123 (FQCP…MRIH). The segment at 129–152 (YRCSYCARSYKSRQSMKEHEYQCP) adopts a C2H2-type 4; degenerate zinc-finger fold. Disordered stretches follow at residues 178 to 210 (NPLA…PPYP), 293 to 342 (QNQQ…VKPT), 361 to 404 (QLED…KEDD), and 451 to 473 (DESK…STQD). Residues 307-326 (PSLSEATPSSHSSHSSAEDS) are compositionally biased toward low complexity. The span at 327 to 336 (GQVNKFSPTE) shows a compositional bias: polar residues. Basic and acidic residues predominate over residues 369–383 (DSRKRPHSFESEPTP). Positions 456–471 (EISSVDSRSPLDQSST) are enriched in polar residues. 2 consecutive C2H2-type zinc fingers follow at residues 494–516 (WECK…MGVH) and 522–546 (LVCN…HHQH).

The protein belongs to the Ikaros C2H2-type zinc-finger protein family. As to expression, expression is strongest in the anterior Fol cells of the oikoplastic epithelium.

It is found in the nucleus. The polypeptide is Ikaros family zinc finger protein (Oikopleura dioica (Tunicate)).